Reading from the N-terminus, the 23-residue chain is Pseudin-4 (23 aa).

Expressed by the skin glands.

The protein resides in the secreted. Functionally, possesses antifungal activity against C.albicans and is also active against E.coli and S.aureus. This chain is Pseudin-4, found in Pseudis paradoxa (Paradoxical frog).